A 207-amino-acid polypeptide reads, in one-letter code: Large ribosomal subunit protein uL4 (207 aa).

The disordered stretch occupies residues 53 to 76 (TVSEVSGTTKKPFKQKGTGNARQG).

Belongs to the universal ribosomal protein uL4 family. Part of the 50S ribosomal subunit.

One of the primary rRNA binding proteins, this protein initially binds near the 5'-end of the 23S rRNA. It is important during the early stages of 50S assembly. It makes multiple contacts with different domains of the 23S rRNA in the assembled 50S subunit and ribosome. Functionally, forms part of the polypeptide exit tunnel. The protein is Large ribosomal subunit protein uL4 of Rickettsia bellii (strain OSU 85-389).